Consider the following 96-residue polypeptide: Small ribosomal subunit protein bS6 (96 aa).

The protein belongs to the bacterial ribosomal protein bS6 family.

Functionally, binds together with bS18 to 16S ribosomal RNA. In Synechococcus sp. (strain JA-2-3B'a(2-13)) (Cyanobacteria bacterium Yellowstone B-Prime), this protein is Small ribosomal subunit protein bS6.